Here is a 600-residue protein sequence, read N- to C-terminus: UvrABC system protein C (600 aa).

Positions 15 to 92 constitute a GIY-YIG domain; it reads EKPGCYLMKD…IKKYQPYYNV (78 aa). The 36-residue stretch at 197 to 232 folds into the UVR domain; that stretch reads GAVKQDLTQKMEQASEQLEFERAAEIRDQLKYIEET.

Belongs to the UvrC family. Interacts with UvrB in an incision complex.

The protein resides in the cytoplasm. Functionally, the UvrABC repair system catalyzes the recognition and processing of DNA lesions. UvrC both incises the 5' and 3' sides of the lesion. The N-terminal half is responsible for the 3' incision and the C-terminal half is responsible for the 5' incision. The protein is UvrABC system protein C of Lactobacillus helveticus (strain DPC 4571).